A 742-amino-acid chain; its full sequence is Phosphoribosylformylglycinamidine synthase subunit PurL (742 aa).

The active site involves H54. ATP-binding residues include Y57 and K96. E98 provides a ligand contact to Mg(2+). Residues 99–102 (SHNH) and R121 contribute to the substrate site. H100 functions as the Proton acceptor in the catalytic mechanism. A Mg(2+)-binding site is contributed by D122. A substrate-binding site is contributed by Q245. D273 contributes to the Mg(2+) binding site. 317–319 (ESQ) contributes to the substrate binding site. The ATP site is built by D500 and G537. N538 provides a ligand contact to Mg(2+). S540 provides a ligand contact to substrate.

The protein belongs to the FGAMS family. As to quaternary structure, monomer. Part of the FGAM synthase complex composed of 1 PurL, 1 PurQ and 2 PurS subunits.

It is found in the cytoplasm. It carries out the reaction N(2)-formyl-N(1)-(5-phospho-beta-D-ribosyl)glycinamide + L-glutamine + ATP + H2O = 2-formamido-N(1)-(5-O-phospho-beta-D-ribosyl)acetamidine + L-glutamate + ADP + phosphate + H(+). It functions in the pathway purine metabolism; IMP biosynthesis via de novo pathway; 5-amino-1-(5-phospho-D-ribosyl)imidazole from N(2)-formyl-N(1)-(5-phospho-D-ribosyl)glycinamide: step 1/2. In terms of biological role, part of the phosphoribosylformylglycinamidine synthase complex involved in the purines biosynthetic pathway. Catalyzes the ATP-dependent conversion of formylglycinamide ribonucleotide (FGAR) and glutamine to yield formylglycinamidine ribonucleotide (FGAM) and glutamate. The FGAM synthase complex is composed of three subunits. PurQ produces an ammonia molecule by converting glutamine to glutamate. PurL transfers the ammonia molecule to FGAR to form FGAM in an ATP-dependent manner. PurS interacts with PurQ and PurL and is thought to assist in the transfer of the ammonia molecule from PurQ to PurL. This Geobacillus sp. (strain WCH70) protein is Phosphoribosylformylglycinamidine synthase subunit PurL.